We begin with the raw amino-acid sequence, 491 residues long: Probable G-protein coupled receptor Mth-like 7 (491 aa).

The first 22 residues, 1 to 22, serve as a signal peptide directing secretion; that stretch reads MRLPWVIFCTVLLLIFTNNSNA. Residues asparagine 18 and asparagine 42 are each glycosylated (N-linked (GlcNAc...) asparagine). The Extracellular portion of the chain corresponds to 23–167; that stretch reads DIPGCNYYDT…EEVSIQIFNK (145 aa). 3 disulfide bridges follow: cysteine 27–cysteine 80, cysteine 82–cysteine 87, and cysteine 92–cysteine 103. Residues 168-188 traverse the membrane as a helical segment; that stretch reads CGLIVWFQDGKFWVTVDLFME. Over 189 to 222 the chain is Cytoplasmic; sequence KQDYCLYRHNFDSDFPKSMWIIRHRCTSHISPGS. A helical membrane pass occupies residues 223 to 243; sequence LEILIITMICFVLTIAVYLYI. At 244–252 the chain is on the extracellular side; that stretch reads KKLRNVTGK. N-linked (GlcNAc...) asparagine glycosylation occurs at asparagine 248. Residues 253–273 traverse the membrane as a helical segment; it reads CIVCCIVSRFIQCLIMILDHL. Residues 274-325 lie on the Cytoplasmic side of the membrane; sequence NLLNGICSPAGYSSHFFRMASNLWLSVISYHTWKVLTSLNRVDPNYRFLRYN. Residues 326-346 form a helical membrane-spanning segment; it reads AFVWSTAAIMTGSIYIVNQIW. Over 347 to 372 the chain is Extracellular; that stretch reads ENDPSKWNWLPLVGFIRCSVKDWHPS. Residues 373–393 traverse the membrane as a helical segment; that stretch reads VWIYISGPSLALSTFNVAMFA. The Cytoplasmic portion of the chain corresponds to 394–434; sequence LTAIYIRKVKGGINKFTNEEEGRINCINFDSQTYLQFLRLS. The helical transmembrane segment at 435–455 threads the bilayer; it reads IVMGLTWIFNVIPYSARLHIF. Residues 456–458 lie on the Extracellular side of the membrane; sequence WEW. Residues 459–479 form a helical membrane-spanning segment; that stretch reads VGIISEYFHSAFGIVLFVLLV. The Cytoplasmic portion of the chain corresponds to 480-491; that stretch reads LKRSTWTLMMDS.

Belongs to the G-protein coupled receptor 2 family. Mth subfamily.

The protein localises to the cell membrane. This is Probable G-protein coupled receptor Mth-like 7 (mthl7) from Drosophila melanogaster (Fruit fly).